The chain runs to 365 residues: tRNA N6-adenosine threonylcarbamoyltransferase (365 aa).

Fe cation contacts are provided by His-119 and His-123. Substrate-binding positions include 141 to 145, Asp-174, Gly-187, and Asn-288; that span reads LVSGG. A Fe cation-binding site is contributed by Asp-316.

Belongs to the KAE1 / TsaD family. Fe(2+) is required as a cofactor.

Its subcellular location is the cytoplasm. It catalyses the reaction L-threonylcarbamoyladenylate + adenosine(37) in tRNA = N(6)-L-threonylcarbamoyladenosine(37) in tRNA + AMP + H(+). Required for the formation of a threonylcarbamoyl group on adenosine at position 37 (t(6)A37) in tRNAs that read codons beginning with adenine. Is involved in the transfer of the threonylcarbamoyl moiety of threonylcarbamoyl-AMP (TC-AMP) to the N6 group of A37, together with TsaE and TsaB. TsaD likely plays a direct catalytic role in this reaction. This Rhizobium johnstonii (strain DSM 114642 / LMG 32736 / 3841) (Rhizobium leguminosarum bv. viciae) protein is tRNA N6-adenosine threonylcarbamoyltransferase.